Reading from the N-terminus, the 263-residue chain is Putative hydro-lyase Pden_0321 (263 aa).

The protein belongs to the D-glutamate cyclase family.

In Paracoccus denitrificans (strain Pd 1222), this protein is Putative hydro-lyase Pden_0321.